The primary structure comprises 711 residues: MSRSKGPLSFKDVAVAFSQEEWQQLDPEERTTYRDVMLETYSNLVSVGYDVTKPNMIIKLEQGEEPWTVEGDRHAQRHLEISKVYDPREGIEEIGEKHLQCDDDPYCWRAEKGAAFDEAYTLETALISPSSGAHSCVSCGETLESVSELISSDGSYALEKPSMCFECGKAYGESLEDFNQDEGNSSQHDENILQKVTILEKPFAYECMEALDSESVFMARERAYMGEKPYDWGDSGPDFIQMSDFSTYPRSQMELKPFECTQCGKSFCKKSKFIIHQRAHTGEKPYACSVCGKSFSQKGTLTVHRRSHLEEKPYKCNECGKTFCQKLHLTQHQRTHSGEKPYECSECGKSFCQKTHLTLHQRNHSGERPYPCNECGKSFSRKSALNDHQRTHTGEKLYKCNECGKSYYRKSTLITHQRTHTGEKPYQCSECGKFFSRVSYLTIHYRSHLEEKPYECTECGKTFNLNSAFIRHWKVHAEERVQECGECGKPSPLQCAPDHTGDLGEKRYECNECGKTFLDSSAFHRHQSVPEGEKTYECNICGKSFSDSSCYTVHYRGHSEEKPFGCSECGKTFSHNSSLFRHQRVHTGEKPYECYECGKFFSQKSYLTIHHRIHSGEKPYECSKCGKVFSRMSNLTVHYRSHSGEKPYECNECGKVFSQKSYLTVHYRTHSGEKPYECNECGKKFHHRSAFNSHQRIHKRGTVNVLTVEKL.

Residues 8-79 (LSFKDVAVAF…EGDRHAQRHL (72 aa)) enclose the KRAB domain. Glycyl lysine isopeptide (Lys-Gly) (interchain with G-Cter in SUMO2) cross-links involve residues Lys97 and Lys256. Residues 170–257 (AYGESLEDFN…YPRSQMELKP (88 aa)) form a required for interaction with RB1 region. 2 consecutive C2H2-type zinc fingers follow at residues 258 to 280 (FECTQCGKSFCKKSKFIIHQRAH) and 286 to 308 (YACSVCGKSFSQKGTLTVHRRSH). Lys312 is covalently cross-linked (Glycyl lysine isopeptide (Lys-Gly) (interchain with G-Cter in SUMO2)). 6 consecutive C2H2-type zinc fingers follow at residues 314–336 (YKCNECGKTFCQKLHLTQHQRTH), 342–364 (YECSECGKSFCQKTHLTLHQRNH), 370–392 (YPCNECGKSFSRKSALNDHQRTH), 398–420 (YKCNECGKSYYRKSTLITHQRTH), 426–448 (YQCSECGKFFSRVSYLTIHYRSH), and 454–476 (YECTECGKTFNLNSAFIRHWKVH). Lys354 is covalently cross-linked (Glycyl lysine isopeptide (Lys-Gly) (interchain with G-Cter in SUMO2)). The segment at 414-711 (ITHQRTHTGE…TVNVLTVEKL (298 aa)) is interaction with AR. The C2H2-type 9; degenerate zinc finger occupies 508 to 530 (YECNECGKTFLDSSAFHRHQSVP). Lys534 is covalently cross-linked (Glycyl lysine isopeptide (Lys-Gly) (interchain with G-Cter in SUMO2)). C2H2-type zinc fingers lie at residues 536–558 (YECNICGKSFSDSSCYTVHYRGH), 564–586 (FGCSECGKTFSHNSSLFRHQRVH), 592–614 (YECYECGKFFSQKSYLTIHHRIH), 620–642 (YECSKCGKVFSRMSNLTVHYRSH), 648–670 (YECNECGKVFSQKSYLTVHYRTH), and 676–698 (YECNECGKKFHHRSAFNSHQRIH).

Belongs to the krueppel C2H2-type zinc-finger protein family. Interacts with AR. May also interact with other nuclear hormone receptors such as NR3C1/GR. Interacts with RB1.

Its subcellular location is the nucleus. In terms of biological role, may repress E2F-dependent transcription. May promote AR-dependent transcription. This is RB-associated KRAB zinc finger protein (Rbak) from Mus musculus (Mouse).